A 433-amino-acid polypeptide reads, in one-letter code: Zinc finger protein CONSTANS-LIKE 15 (433 aa).

Zn(2+) contacts are provided by Cys9, Cys12, Cys32, His37, Cys52, Cys55, Cys75, and His80. The B box-type 1; atypical zinc-finger motif lies at 9-51 (CDFCGERTAVLFCRADTAKLCLPCDQQVHTANLLSRKHVRSQI). Residues 52–94 (CDNCGNEPVSVRCFTDNLILCQECDWDVHGSCSVSDAHVRSAV) form a B box-type 2; atypical zinc finger. A disordered region spans residues 319-353 (DDYKRSTSGQVQPTKSESNNRPITFGSEKGSNSSS). Polar residues predominate over residues 324–340 (STSGQVQPTKSESNNRP). A coiled-coil region spans residues 374-398 (TKADLERLAQNRGDAMQRYKEKRKT). Residues 385–427 (RGDAMQRYKEKRKTRRYDKTIRYESRKARADTRLRVRGRFVKA) form the CCT domain.

It belongs to the CONSTANS family.

Its subcellular location is the nucleus. The protein is Zinc finger protein CONSTANS-LIKE 15 (COL15) of Arabidopsis thaliana (Mouse-ear cress).